The primary structure comprises 112 residues: Large ribosomal subunit protein uL22 (112 aa).

Belongs to the universal ribosomal protein uL22 family. In terms of assembly, part of the 50S ribosomal subunit.

Functionally, this protein binds specifically to 23S rRNA; its binding is stimulated by other ribosomal proteins, e.g. L4, L17, and L20. It is important during the early stages of 50S assembly. It makes multiple contacts with different domains of the 23S rRNA in the assembled 50S subunit and ribosome. In terms of biological role, the globular domain of the protein is located near the polypeptide exit tunnel on the outside of the subunit, while an extended beta-hairpin is found that lines the wall of the exit tunnel in the center of the 70S ribosome. In Sorangium cellulosum (strain So ce56) (Polyangium cellulosum (strain So ce56)), this protein is Large ribosomal subunit protein uL22.